The primary structure comprises 89 residues: Small ribosomal subunit protein uS14 (89 aa).

The protein belongs to the universal ribosomal protein uS14 family. As to quaternary structure, part of the 30S ribosomal subunit. Contacts proteins S3 and S10.

Functionally, binds 16S rRNA, required for the assembly of 30S particles and may also be responsible for determining the conformation of the 16S rRNA at the A site. This Acholeplasma laidlawii (strain PG-8A) protein is Small ribosomal subunit protein uS14.